The chain runs to 161 residues: Nucleotide-binding protein AZOSEA28950 (161 aa).

Belongs to the YajQ family.

Its function is as follows. Nucleotide-binding protein. The protein is Nucleotide-binding protein AZOSEA28950 of Aromatoleum aromaticum (strain DSM 19018 / LMG 30748 / EbN1) (Azoarcus sp. (strain EbN1)).